The following is a 189-amino-acid chain: Cancer/testis antigen family 45 member A3 (189 aa).

Residues 81-119 (KDRMMQKPGSNAPVGGNVTSSFSGDDLECRETASSPKSQ) form a disordered region.

It belongs to the CT45 family. As to expression, testis specific. Expressed in cancer cell lines.

The protein resides in the nucleus. The protein is Cancer/testis antigen family 45 member A3 of Homo sapiens (Human).